The chain runs to 211 residues: NADH-quinone oxidoreductase subunit I 1 (211 aa).

2 consecutive 4Fe-4S ferredoxin-type domains span residues 50–80 (LNRHPDGLEKCVGCELCAWACPADAIYVEGA) and 96–125 (RVYQINYARCILCGLCIEACPTRALTMTNE). [4Fe-4S] cluster is bound by residues Cys60, Cys63, Cys66, Cys70, Cys105, Cys108, Cys111, and Cys115. Positions 192-211 (QEGDSTFGATEPASEEVIRR) are disordered.

Belongs to the complex I 23 kDa subunit family. In terms of assembly, NDH-1 is composed of 14 different subunits. Subunits NuoA, H, J, K, L, M, N constitute the membrane sector of the complex. Requires [4Fe-4S] cluster as cofactor.

The protein resides in the cell membrane. The enzyme catalyses a quinone + NADH + 5 H(+)(in) = a quinol + NAD(+) + 4 H(+)(out). Its function is as follows. NDH-1 shuttles electrons from NADH, via FMN and iron-sulfur (Fe-S) centers, to quinones in the respiratory chain. The immediate electron acceptor for the enzyme in this species is believed to be ubiquinone. Couples the redox reaction to proton translocation (for every two electrons transferred, four hydrogen ions are translocated across the cytoplasmic membrane), and thus conserves the redox energy in a proton gradient. This is NADH-quinone oxidoreductase subunit I 1 from Streptomyces coelicolor (strain ATCC BAA-471 / A3(2) / M145).